A 393-amino-acid polypeptide reads, in one-letter code: Geranylgeranyl pyrophosphate synthase 2 (393 aa).

Positions 109, 112, and 141 each coordinate isopentenyl diphosphate. Residues Asp-148 and Asp-152 each contribute to the Mg(2+) site. Position 157 (Arg-157) interacts with dimethylallyl diphosphate. Arg-158 is an isopentenyl diphosphate binding site. Residues Lys-235, Thr-236, and Gln-275 each contribute to the dimethylallyl diphosphate site. Asp-278 provides a ligand contact to Mg(2+). Asn-282, Lys-292, and Lys-302 together coordinate dimethylallyl diphosphate.

It belongs to the FPP/GGPP synthase family. Mg(2+) is required as a cofactor.

It carries out the reaction isopentenyl diphosphate + dimethylallyl diphosphate = (2E)-geranyl diphosphate + diphosphate. The catalysed reaction is isopentenyl diphosphate + (2E)-geranyl diphosphate = (2E,6E)-farnesyl diphosphate + diphosphate. The enzyme catalyses isopentenyl diphosphate + (2E,6E)-farnesyl diphosphate = (2E,6E,10E)-geranylgeranyl diphosphate + diphosphate. Its pathway is plant hormone biosynthesis; gibberellin biosynthesis. Its function is as follows. Geranylgeranyl pyrophosphate synthase; part of the gene cluster that mediates the biosynthesis of gibberellins (GAs), diterpenoids that may provide a selective advantage during infection of the preferred host plant, rice. Gibberellins (GAs) are diterpenoids and are synthesized via the mevalonate pathway. Biosynthesis of the major metabolite GA3 (gibberellic acid) from geranylgeranyl diphosphate (GGPP) requires 13 steps. The GGPP produced by the geranylgeranyl diphosphate synthase GGS2 is converted to ent-kaurene via ent-copalyldiphosphate in a two-step cyclization reaction performed by the bifunctional ent-copalyl diphosphate synthase/ent-kaurene synthase enzyme (CPS/KS). Ent-Kaurene is metabolized to GAs by a series of oxidation reactions catalyzed by cytochrome P450 monooxygenases. Cytochrome P450 monooxygenase P450-4 is an ent-kaurene oxidase that catalyzes the three oxidation steps between ent-kaurene and ent-kaurenoic acid. The highly multifunctional cytochrome P450 monooxygenase P450-1 then catalyzes four steps involving oxidation at two carbon atoms, in the main pathway from ent-kaurenoic acid to GA14 via GA12-aldehyde as well as producing kaurenolides and fujenoic acids as by-products. The cytochrome P450 monooxygenase P450-2 then converts GA14 to GA4 by removal of C-20. GA4 is further converted to GA7 by the GA4 desaturase DES via 1,2-desaturation before cytochrome P450 monooxygenase P450-3, a 13-hydroxylase, hydroxylates GA7 to GA3, the final product of the GA-biosynthetic pathway. In Gibberella fujikuroi (strain CBS 195.34 / IMI 58289 / NRRL A-6831) (Bakanae and foot rot disease fungus), this protein is Geranylgeranyl pyrophosphate synthase 2.